The primary structure comprises 92 residues: Pyrimidine/purine nucleoside phosphorylase (92 aa).

The protein belongs to the nucleoside phosphorylase PpnP family.

It carries out the reaction a purine D-ribonucleoside + phosphate = a purine nucleobase + alpha-D-ribose 1-phosphate. The enzyme catalyses adenosine + phosphate = alpha-D-ribose 1-phosphate + adenine. The catalysed reaction is cytidine + phosphate = cytosine + alpha-D-ribose 1-phosphate. It catalyses the reaction guanosine + phosphate = alpha-D-ribose 1-phosphate + guanine. It carries out the reaction inosine + phosphate = alpha-D-ribose 1-phosphate + hypoxanthine. The enzyme catalyses thymidine + phosphate = 2-deoxy-alpha-D-ribose 1-phosphate + thymine. The catalysed reaction is uridine + phosphate = alpha-D-ribose 1-phosphate + uracil. It catalyses the reaction xanthosine + phosphate = alpha-D-ribose 1-phosphate + xanthine. Its function is as follows. Catalyzes the phosphorolysis of diverse nucleosides, yielding D-ribose 1-phosphate and the respective free bases. Can use uridine, adenosine, guanosine, cytidine, thymidine, inosine and xanthosine as substrates. Also catalyzes the reverse reactions. In Rhodopirellula baltica (strain DSM 10527 / NCIMB 13988 / SH1), this protein is Pyrimidine/purine nucleoside phosphorylase.